Reading from the N-terminus, the 429-residue chain is UDP-N-acetylglucosamine 1-carboxyvinyltransferase (429 aa).

22-23 (KN) provides a ligand contact to phosphoenolpyruvate. Arg-102 contacts UDP-N-acetyl-alpha-D-glucosamine. The active-site Proton donor is the Cys-126. Cys-126 carries the post-translational modification 2-(S-cysteinyl)pyruvic acid O-phosphothioketal. Residues 131-135 (RPVDL), 171-174 (KVSV), Asp-316, and Ile-338 each bind UDP-N-acetyl-alpha-D-glucosamine.

Belongs to the EPSP synthase family. MurA subfamily.

Its subcellular location is the cytoplasm. It catalyses the reaction phosphoenolpyruvate + UDP-N-acetyl-alpha-D-glucosamine = UDP-N-acetyl-3-O-(1-carboxyvinyl)-alpha-D-glucosamine + phosphate. The protein operates within cell wall biogenesis; peptidoglycan biosynthesis. In terms of biological role, cell wall formation. Adds enolpyruvyl to UDP-N-acetylglucosamine. The chain is UDP-N-acetylglucosamine 1-carboxyvinyltransferase from Chelativorans sp. (strain BNC1).